We begin with the raw amino-acid sequence, 562 residues long: Dihydroxy-acid dehydratase (562 aa).

Residue cysteine 53 coordinates [2Fe-2S] cluster. Aspartate 85 serves as a coordination point for Mg(2+). Residue cysteine 126 participates in [2Fe-2S] cluster binding. Residues aspartate 127 and lysine 128 each coordinate Mg(2+). The residue at position 128 (lysine 128) is an N6-carboxylysine. Cysteine 198 contacts [2Fe-2S] cluster. Glutamate 449 is a Mg(2+) binding site. Serine 475 acts as the Proton acceptor in catalysis.

This sequence belongs to the IlvD/Edd family. In terms of assembly, homodimer. [2Fe-2S] cluster serves as cofactor. It depends on Mg(2+) as a cofactor.

It catalyses the reaction (2R)-2,3-dihydroxy-3-methylbutanoate = 3-methyl-2-oxobutanoate + H2O. It carries out the reaction (2R,3R)-2,3-dihydroxy-3-methylpentanoate = (S)-3-methyl-2-oxopentanoate + H2O. It functions in the pathway amino-acid biosynthesis; L-isoleucine biosynthesis; L-isoleucine from 2-oxobutanoate: step 3/4. The protein operates within amino-acid biosynthesis; L-valine biosynthesis; L-valine from pyruvate: step 3/4. In terms of biological role, functions in the biosynthesis of branched-chain amino acids. Catalyzes the dehydration of (2R,3R)-2,3-dihydroxy-3-methylpentanoate (2,3-dihydroxy-3-methylvalerate) into 2-oxo-3-methylpentanoate (2-oxo-3-methylvalerate) and of (2R)-2,3-dihydroxy-3-methylbutanoate (2,3-dihydroxyisovalerate) into 2-oxo-3-methylbutanoate (2-oxoisovalerate), the penultimate precursor to L-isoleucine and L-valine, respectively. The sequence is that of Dihydroxy-acid dehydratase from Methylococcus capsulatus (strain ATCC 33009 / NCIMB 11132 / Bath).